The chain runs to 33 residues: Gaegurin-1 (33 aa).

A disulfide bridge connects residues Cys27 and Cys33.

It belongs to the frog skin active peptide (FSAP) family. Brevinin subfamily. As to quaternary structure, monomer. Expressed by the skin glands.

The protein localises to the secreted. In terms of biological role, has a non-hemolytic activity. Has a broad spectrum of activity against both Gram-positive and Gram-negative bacteria, fungi and protozoa. The polypeptide is Gaegurin-1 (GGN1) (Glandirana rugosa (Japanese wrinkled frog)).